The primary structure comprises 441 residues: GVGFKAGVKDYRLTYYTPEYKTKDTDILAAFRMTPQPGVPAEEAGAAVAAESSTGTWTTVWTDGLTSLDRYKGRCYDIEPVAGEENQYIAYVAYPLDLFEEGSVTNMLTSIVGNVFGFKALRALXXEDLRIPPAYSKTFMGPPHGIQVERDKLNKYGRPLLGCTIKPKLGLSAKNYGRAVYECLRGGLDFTKDDENVNSQPFMRWRDRFLFVAEALFKSQAETGEIKGHYLNATAGTCEEMLKRAVFARELGVPIVMHDYLTGGFTANTSLAFYCRDNGLLLHIHRAMHAVIDRQKNHGMHFRVLAKALRMSGGDHIHAGTVVGKLEGEREVTLGFVDLLRDDYIEKDRSRGIYFTQDWVSMPGVFPVASGGIHVWHMPALTEIFGDDSVLQFGGGTLGHPWGNAPGAVANRVALEACVQARNEGRDLAREGNEIIREACK.

Lys-5 is subject to N6,N6,N6-trimethyllysine. The substrate site is built by Asn-114 and Thr-164. Lys-166 acts as the Proton acceptor in catalysis. Lys-168 contributes to the substrate binding site. Positions 192, 194, and 195 each coordinate Mg(2+). Position 192 is an N6-carboxylysine (Lys-192). His-285 acts as the Proton acceptor in catalysis. Residues Arg-286, His-318, and Ser-370 each contribute to the substrate site.

It belongs to the RuBisCO large chain family. Type I subfamily. In terms of assembly, heterohexadecamer of 8 large chains and 8 small chains; disulfide-linked. The disulfide link is formed within the large subunit homodimers. Mg(2+) serves as cofactor. In terms of processing, the disulfide bond which can form in the large chain dimeric partners within the hexadecamer appears to be associated with oxidative stress and protein turnover.

Its subcellular location is the plastid. The protein resides in the chloroplast. It carries out the reaction 2 (2R)-3-phosphoglycerate + 2 H(+) = D-ribulose 1,5-bisphosphate + CO2 + H2O. The catalysed reaction is D-ribulose 1,5-bisphosphate + O2 = 2-phosphoglycolate + (2R)-3-phosphoglycerate + 2 H(+). In terms of biological role, ruBisCO catalyzes two reactions: the carboxylation of D-ribulose 1,5-bisphosphate, the primary event in carbon dioxide fixation, as well as the oxidative fragmentation of the pentose substrate in the photorespiration process. Both reactions occur simultaneously and in competition at the same active site. This chain is Ribulose bisphosphate carboxylase large chain, found in Pellaea andromedifolia (Coffee fern).